A 257-amino-acid polypeptide reads, in one-letter code: tRNA (guanine-N(7)-)-methyltransferase (257 aa).

The interval 1–58 (MQPIEQPGTGPDDITPESQDTNTAESAESGAETGHPRRIRSFVRRAGRTSTGQQRAIN) is disordered. The segment covering 16–26 (PESQDTNTAES) has biased composition (polar residues). Basic residues predominate over residues 36 to 47 (PRRIRSFVRRAG). 4 residues coordinate S-adenosyl-L-methionine: Glu-89, Glu-114, Asp-141, and Asp-164. Residue Asp-164 is part of the active site. Lys-168 lines the substrate pocket. Residues 170–175 (RHNKRR) are interaction with RNA. Residues Asp-200 and 235-238 (TKFE) contribute to the substrate site.

Belongs to the class I-like SAM-binding methyltransferase superfamily. TrmB family.

It carries out the reaction guanosine(46) in tRNA + S-adenosyl-L-methionine = N(7)-methylguanosine(46) in tRNA + S-adenosyl-L-homocysteine. It participates in tRNA modification; N(7)-methylguanine-tRNA biosynthesis. Catalyzes the formation of N(7)-methylguanine at position 46 (m7G46) in tRNA. This Ralstonia pickettii (strain 12J) protein is tRNA (guanine-N(7)-)-methyltransferase.